A 146-amino-acid polypeptide reads, in one-letter code: Acidic phospholipase A2 D (146 aa).

The N-terminal stretch at 1-21 (MNPAHLLILAAVCVSPLGASS) is a signal peptide. Residues 22–27 (NRPMPL) constitute a propeptide that is removed on maturation. Intrachain disulfides connect C38–C98, C53–C145, C55–C71, C70–C126, C77–C119, C87–C112, and C105–C117. The Ca(2+) site is built by Y54, G56, and G58. H74 is a catalytic residue. D75 serves as a coordination point for Ca(2+). Residue D120 is part of the active site.

It belongs to the phospholipase A2 family. Group I subfamily. D49 sub-subfamily. It depends on Ca(2+) as a cofactor. In terms of tissue distribution, expressed by the venom gland.

It localises to the secreted. It catalyses the reaction a 1,2-diacyl-sn-glycero-3-phosphocholine + H2O = a 1-acyl-sn-glycero-3-phosphocholine + a fatty acid + H(+). PLA2 catalyzes the calcium-dependent hydrolysis of the 2-acyl groups in 3-sn-phosphoglycerides. This chain is Acidic phospholipase A2 D, found in Naja sputatrix (Malayan spitting cobra).